Here is a 914-residue protein sequence, read N- to C-terminus: Eukaryotic translation initiation factor 3 subunit C-like protein (914 aa).

The segment at 1-44 (MSRFFTTGSDSESESSLSGEELVTKPVGGNYGKQPLLLSEDEED) is disordered. Residues 8-21 (GSDSESESSLSGEE) are compositionally biased toward low complexity. Residues serine 9, serine 11, serine 13, serine 15, serine 16, serine 18, and serine 39 each carry the phosphoserine modification. Lysine 99 bears the N6-acetyllysine mark. 2 disordered regions span residues 157–302 (TSYK…GGEW) and 523–543 (QLTPPEGSSKSEQDQAENEGE). A phosphoserine mark is found at serine 166, serine 178, serine 181, and serine 182. The span at 166–190 (SADEDAEKNEEDSEGSSDEDEDEDG) shows a compositional bias: acidic residues. Residues 199 to 216 (KKSEAPSGESRKFLKKMD) are compositionally biased toward basic and acidic residues. Residues 217-232 (DEDEDSEDSEDDEDWD) are compositionally biased toward acidic residues. Basic and acidic residues predominate over residues 261 to 278 (PTTDEDKKAAEKKREDKA). Over residues 291–300 (EEEEEDNEGG) the composition is skewed to acidic residues. The span at 523-532 (QLTPPEGSSK) shows a compositional bias: polar residues. Threonine 525 is modified (phosphothreonine). Residue lysine 644 is modified to N6-acetyllysine. In terms of domain architecture, PCI spans 674–850 (FHLHINLELL…QTVVMHRTEP (177 aa)). The interval 886-914 (FRDQKDGYRKNEGYMRRGGYRQQQSQTAY) is disordered. Basic and acidic residues predominate over residues 887 to 900 (RDQKDGYRKNEGYM). Serine 910 carries the phosphoserine modification.

This sequence belongs to the eIF-3 subunit C family. As to quaternary structure, component of the eukaryotic translation initiation factor 3 (eIF-3) complex, which is composed of 13 subunits: EIF3A, EIF3B, EIF3C, EIF3D, EIF3E, EIF3F, EIF3G, EIF3H, EIF3I, EIF3J, EIF3K, EIF3L and EIF3M. The eIF-3 complex appears to include 3 stable modules: module A is composed of EIF3A, EIF3B, EIF3G and EIF3I; module B is composed of EIF3F, EIF3H, and EIF3M; and module C is composed of EIF3C, EIF3D, EIF3E, EIF3K and EIF3L. EIF3C of module C binds EIF3B of module A and EIF3H of module B, thereby linking the three modules. EIF3J is a labile subunit that binds to the eIF-3 complex via EIF3B. The eIF-3 complex interacts with RPS6KB1 under conditions of nutrient depletion. Mitogenic stimulation leads to binding and activation of a complex composed of MTOR and RPTOR, leading to phosphorylation and release of RPS6KB1 and binding of EIF4B to eIF-3. Post-translationally, phosphorylated. Phosphorylation is enhanced upon serum stimulation.

It is found in the cytoplasm. Its function is as follows. Component of the eukaryotic translation initiation factor 3 (eIF-3) complex, which is required for several steps in the initiation of protein synthesis. The eIF-3 complex associates with the 40S ribosome and facilitates the recruitment of eIF-1, eIF-1A, eIF-2:GTP:methionyl-tRNAi and eIF-5 to form the 43S pre-initiation complex (43S PIC). The eIF-3 complex stimulates mRNA recruitment to the 43S PIC and scanning of the mRNA for AUG recognition. The eIF-3 complex is also required for disassembly and recycling of post-termination ribosomal complexes and subsequently prevents premature joining of the 40S and 60S ribosomal subunits prior to initiation. The eIF-3 complex specifically targets and initiates translation of a subset of mRNAs involved in cell proliferation, including cell cycling, differentiation and apoptosis, and uses different modes of RNA stem-loop binding to exert either translational activation or repression. The polypeptide is Eukaryotic translation initiation factor 3 subunit C-like protein (EIF3CL) (Homo sapiens (Human)).